The following is a 196-amino-acid chain: MAPAASKLRAEAGLGPLPRRALSQYLRLLRLYPVLTKAATSGILSALGNFLAQLIEKKQKKENCSQKLDVSGPLRYAIYGFFFTGPLGHFFYLLMERWIPSEVPLAGIKRLLLDRLLFAPAFLSLFFLVMNFLEGQDTAAFAAKMKSGFWPALRMNWRVWTPVQFININYIPVQFRVLFANLVALFWYAYLASLGK.

The Cytoplasmic portion of the chain corresponds to 1–30; that stretch reads MAPAASKLRAEAGLGPLPRRALSQYLRLLR. The helical transmembrane segment at 31–51 threads the bilayer; that stretch reads LYPVLTKAATSGILSALGNFL. At 52-76 the chain is on the peroxisomal side; the sequence is AQLIEKKQKKENCSQKLDVSGPLRY. Residues 77–97 form a helical membrane-spanning segment; sequence AIYGFFFTGPLGHFFYLLMER. The Cytoplasmic segment spans residues 98–115; sequence WIPSEVPLAGIKRLLLDR. Residues 116–136 traverse the membrane as a helical segment; the sequence is LLFAPAFLSLFFLVMNFLEGQ. Residues 137–174 lie on the Peroxisomal side of the membrane; that stretch reads DTAAFAAKMKSGFWPALRMNWRVWTPVQFININYIPVQ. The helical transmembrane segment at 175 to 196 threads the bilayer; the sequence is FRVLFANLVALFWYAYLASLGK.

The protein belongs to the peroxisomal membrane protein PXMP2/4 family. In terms of assembly, interacts with PEX19 and SIVA1.

It localises to the peroxisome membrane. Functionally, seems to be involved in pore-forming activity and may contribute to the unspecific permeability of the peroxisomal membrane. This is Peroxisomal membrane protein 2 (PXMP2) from Bos taurus (Bovine).